Here is a 186-residue protein sequence, read N- to C-terminus: ATP synthase subunit delta (186 aa).

It belongs to the ATPase delta chain family. F-type ATPases have 2 components, F(1) - the catalytic core - and F(0) - the membrane proton channel. F(1) has five subunits: alpha(3), beta(3), gamma(1), delta(1), epsilon(1). F(0) has three main subunits: a(1), b(2) and c(10-14). The alpha and beta chains form an alternating ring which encloses part of the gamma chain. F(1) is attached to F(0) by a central stalk formed by the gamma and epsilon chains, while a peripheral stalk is formed by the delta and b chains.

It is found in the cell inner membrane. F(1)F(0) ATP synthase produces ATP from ADP in the presence of a proton or sodium gradient. F-type ATPases consist of two structural domains, F(1) containing the extramembraneous catalytic core and F(0) containing the membrane proton channel, linked together by a central stalk and a peripheral stalk. During catalysis, ATP synthesis in the catalytic domain of F(1) is coupled via a rotary mechanism of the central stalk subunits to proton translocation. In terms of biological role, this protein is part of the stalk that links CF(0) to CF(1). It either transmits conformational changes from CF(0) to CF(1) or is implicated in proton conduction. The protein is ATP synthase subunit delta of Nitrobacter winogradskyi (strain ATCC 25391 / DSM 10237 / CIP 104748 / NCIMB 11846 / Nb-255).